Consider the following 636-residue polypeptide: MSDWSIEDARSGYNVTHWSQGFYGIREDGEVTVSPNPQNPDHKVGLNELAKSMVEAGVSLPVLVRFPQILHHRVESLCEAFNDAIKKYDYQNDYLLVYPIKVNQQKTVVEEILASQKSKEVPQLGLEAGSKPELMAVLAMAQKASSVIVCNGYKDKEYIRLALIGEKLGHKVYIVLEKMSELKMVLIEAEKLGITPRLGLRVRLAFQGKGKWQASGGEKSKFGLSAAQVLKVIAELKSANMLDSLQLLHFHLGSQIANIRDIRQGVSEAGRFYCELRQLGASIDCFDVGGGLAVDYDGTRSQSNNSMNYGLNEYANNIVNVLTDLCNEYEQPMPRIISESGRHLTAHHAVLITDVIGTEAYQPENIQEPSEDAPQLLHNMWQSWLEISGRYDQRAIIEIYHDSQSDISEAHSLFAVGQLSLADRAWAEQANLRVCHEVKGLLSNNNRYHRPVIDELNEKLADKFFVNFSLFQSLPDAWGIDQVFPVLPLSGLDKAPERRAVMLDITCDSDGIVDQYVDGQGIETTLPVPAWSADSPYLIGFFMVGAYQEILGDMHNLFGDTNSAVVRIDERGLSQIESVLEGDTVADVLRYVNLDAVDFMRTYEELVNQHIVEEERASILEELQLGLKGYTYLEDF.

Lys-101 carries the post-translational modification N6-(pyridoxal phosphate)lysine. 286–296 (FDVGGGLAVDY) is a binding site for substrate.

This sequence belongs to the Orn/Lys/Arg decarboxylase class-II family. SpeA subfamily. It depends on Mg(2+) as a cofactor. Pyridoxal 5'-phosphate serves as cofactor.

The catalysed reaction is L-arginine + H(+) = agmatine + CO2. It participates in amine and polyamine biosynthesis; agmatine biosynthesis; agmatine from L-arginine: step 1/1. Catalyzes the biosynthesis of agmatine from arginine. The polypeptide is Biosynthetic arginine decarboxylase (Shewanella frigidimarina (strain NCIMB 400)).